Reading from the N-terminus, the 268-residue chain is tRNA threonylcarbamoyladenosine dehydratase (268 aa).

The chain crosses the membrane as a helical span at residues 237–257; it reads GFGAATMVTATFGFVAVSHAL.

The protein belongs to the HesA/MoeB/ThiF family. As to quaternary structure, interacts with CsdE.

Its subcellular location is the membrane. Catalyzes the ATP-dependent dehydration of threonylcarbamoyladenosine at position 37 (t(6)A37) to form cyclic t(6)A37 (ct(6)A37) in tRNAs that read codons beginning with adenine. TcdA is also part of a sulfur transfer pathway; is able to accept sulfur from CsdA directly in vitro, but CsdE might act as the sulfur donor in vivo. This chain is tRNA threonylcarbamoyladenosine dehydratase (tcdA), found in Escherichia coli (strain K12).